The chain runs to 89 residues: Large ribosomal subunit protein uL23c (89 aa).

The protein belongs to the universal ribosomal protein uL23 family. In terms of assembly, part of the 50S ribosomal subunit.

It localises to the plastid. The protein resides in the chloroplast. Functionally, binds to 23S rRNA. This chain is Large ribosomal subunit protein uL23c (rpl23), found in Zygnema circumcarinatum (Green alga).